A 202-amino-acid polypeptide reads, in one-letter code: uncharacterized protein (202 aa).

The interval 118–202 (SSVSPVSSKK…KVSGTKKVKA (85 aa)) is disordered. Ser-121 is modified (phosphoserine). Composition is skewed to basic residues over residues 142 to 163 (EKSKKKKEKKEKKDKLKKKSKR) and 186 to 202 (SSKSGLKKVSGTKKVKA).

The protein resides in the nucleus. It is found in the nucleolus. This is an uncharacterized protein from Schizosaccharomyces pombe (strain 972 / ATCC 24843) (Fission yeast).